The chain runs to 312 residues: Olfactory receptor 10P22 (312 aa).

At 1 to 26 (MGDDNDTDITEFILLGFSGYGFLQGH) the chain is on the extracellular side. Asn-5 is a glycosylation site (N-linked (GlcNAc...) asparagine). Residues 27–47 (LFWGVLCIYVVTLLGNSLIVL) form a helical membrane-spanning segment. Residues 48–57 (LTLADSALHS) are Cytoplasmic-facing. A helical membrane pass occupies residues 58–78 (PMYFFLRHFSVVEILYTTTIV). Over 79 to 89 (PRMLADLRSSC) the chain is Extracellular. Residues 90–110 (PTIPLASCFTQLYFFALFGIA) traverse the membrane as a helical segment. Residues 111–143 (ECCLLTAMAYDRYAAICCPLHYTTLMSQGTYTG) lie on the Cytoplasmic side of the membrane. Residues 144–164 (LVGASYLAGVISGTTHSIFIF) form a helical membrane-spanning segment. The Extracellular portion of the chain corresponds to 165–205 (TLPFRGAKTIHHFLCDILPVLRLATASTFWGEVGNLFVTIT). The helical transmembrane segment at 206 to 226 (FIFVPFLLIVASYACILVTIL) threads the bilayer. Topologically, residues 227 to 236 (GVATSQGRQK) are cytoplasmic. A helical transmembrane segment spans residues 237–257 (LFSTCSSHLFVVILFFGTATV). Residues 258–271 (AYMRPQADSFGNTD) are Extracellular-facing. Residues 272–292 (QILTLVYTVVTPMCNPFVYSL) traverse the membrane as a helical segment. The Cytoplasmic segment spans residues 293-312 (RNKEVTGAMRRLMKRYLWGP).

The protein belongs to the G-protein coupled receptor 1 family.

The protein localises to the cell membrane. In terms of biological role, odorant receptor. The protein is Olfactory receptor 10P22 of Mus musculus (Mouse).